We begin with the raw amino-acid sequence, 492 residues long: MKKAILSVSNKTGIVEFAKALTQLNYELYSTGGTKRILDEANVPVRSVSDLTHFPEIMDGRVKTLHPAVHGGILADRNKPQHLNELSEQHIDLIDMVVVNLYPFQQTVANPDVTMDEAIENIDIGGPTMLRAAAKNYKHVTTIVHPADYQEVLTRLRNDSLDESYRQSLMIKVFEHTAEYDEAIVRFFKGDKETLRYGENPQQSAYFVRTSNAKHTIAGAKQLHGKQLSYNNIKDADATLALVKKFDTPATVAVKHMNPCGVGIGDTIEQAFQHAYEADSQSIFGGIVALNRAVTPELAEQLHSIFLEVIIAPKFTDEALDILKQKKNVRLLEIDMTIDSNEEEFVSVSGGYLVQDKDNYVVPKEEMKVVTEVAPTDEQWEAMLLGWKVVPSVKSNAIILSNNKQTVGIGAGQMNRVGAAKIALERAIEINDHVALVSDGFFPMGDTVELAAQHGIKAIIQPSGSIKDQDSIDMANKHGIAMVVTGTRHFKH.

Residues 1-144 form the MGS-like domain; the sequence is MKKAILSVSN…KNYKHVTTIV (144 aa).

It belongs to the PurH family.

It carries out the reaction (6R)-10-formyltetrahydrofolate + 5-amino-1-(5-phospho-beta-D-ribosyl)imidazole-4-carboxamide = 5-formamido-1-(5-phospho-D-ribosyl)imidazole-4-carboxamide + (6S)-5,6,7,8-tetrahydrofolate. The catalysed reaction is IMP + H2O = 5-formamido-1-(5-phospho-D-ribosyl)imidazole-4-carboxamide. The protein operates within purine metabolism; IMP biosynthesis via de novo pathway; 5-formamido-1-(5-phospho-D-ribosyl)imidazole-4-carboxamide from 5-amino-1-(5-phospho-D-ribosyl)imidazole-4-carboxamide (10-formyl THF route): step 1/1. It functions in the pathway purine metabolism; IMP biosynthesis via de novo pathway; IMP from 5-formamido-1-(5-phospho-D-ribosyl)imidazole-4-carboxamide: step 1/1. The sequence is that of Bifunctional purine biosynthesis protein PurH from Staphylococcus aureus (strain USA300).